Reading from the N-terminus, the 495-residue chain is Protein adenylyltransferase Fic (495 aa).

Residues 1-23 (MGTEAEPPSPPSPPAQQQEQANP) are disordered. A helical transmembrane segment spans residues 36–58 (LYRLVLFFIAGSLTAWMFHAFSS). TPR repeat units follow at residues 121-154 (ALVS…APRH) and 155-189 (PEVL…SPSN). Positions 246–251 (SVGIEG) match the Inhibitory (S/T)XXXE(G/N) motif motif. ATP contacts are provided by residues Glu-250 and 331-334 (VGGH). Residues 300–435 (ITIKDILELH…IRPFVRFIAD (136 aa)) form the Fido domain. His-378 is a catalytic residue. ATP-binding positions include 382 to 389 (DGNGRTSR), 414 to 415 (YY), and Asn-422.

This sequence belongs to the fic family. In terms of assembly, homodimer.

The protein resides in the membrane. It carries out the reaction L-tyrosyl-[protein] + ATP = O-(5'-adenylyl)-L-tyrosyl-[protein] + diphosphate. The enzyme catalyses L-threonyl-[protein] + ATP = 3-O-(5'-adenylyl)-L-threonyl-[protein] + diphosphate. The catalysed reaction is 3-O-(5'-adenylyl)-L-threonyl-[protein] + H2O = L-threonyl-[protein] + AMP + H(+). The side chain of Glu-250 determines which of the two opposing activities (AMPylase or de-AMPylase) will take place. In response to endoplasmic reticulum stress, mediates de-AMPylase activity. Adenylyltransferase activity is inhibited by the inhibitory helix present at the N-terminus: Glu-250 binds ATP and competes with ATP-binding at Arg-389, thereby preventing adenylyltransferase activity. In unstressed cells, disengagement of Glu-250 promotes adenylyltransferase activity. Activation dissociates ATP-binding from Glu-250, allowing ordered binding of the entire ATP moiety with the alpha-phosphate in an orientation that is productive for accepting an incoming target hydroxyl side chain. Functionally, protein that can both mediate the addition of adenosine 5'-monophosphate (AMP) to specific residues of target proteins (AMPylation), and the removal of the same modification from target proteins (de-AMPylation), depending on the context. The side chain of Glu-250 determines which of the two opposing activities (AMPylase or de-AMPylase) will take place. Acts as a key regulator of the unfolded protein response (UPR) by mediating AMPylation or de-AMPylation of Hsc70-3/BiP. In unstressed cells, acts as an adenylyltransferase by mediating AMPylation of Hsc70-3/BiP at 'Thr-518', thereby inactivating it. In response to endoplasmic reticulum stress, acts as a phosphodiesterase by mediating removal of ATP (de-AMPylation) from Hsc70-3/BiP at 'Thr-518', leading to restore HSPA5/BiP activity. This Drosophila erecta (Fruit fly) protein is Protein adenylyltransferase Fic.